A 683-amino-acid polypeptide reads, in one-letter code: Translation factor guf1, mitochondrial (683 aa).

Residues Met-1–Ala-43 constitute a mitochondrion transit peptide. A tr-type G domain is found at Glu-66–Val-250. GTP is bound by residues Ala-75 to Ser-82, Asp-139 to His-143, and Asn-193 to Asp-196.

The protein belongs to the TRAFAC class translation factor GTPase superfamily. Classic translation factor GTPase family. LepA subfamily.

It is found in the mitochondrion inner membrane. The catalysed reaction is GTP + H2O = GDP + phosphate + H(+). Promotes mitochondrial protein synthesis. May act as a fidelity factor of the translation reaction, by catalyzing a one-codon backward translocation of tRNAs on improperly translocated ribosomes. Binds to mitochondrial ribosomes in a GTP-dependent manner. The protein is Translation factor guf1, mitochondrial (guf1) of Aspergillus fumigatus (strain ATCC MYA-4609 / CBS 101355 / FGSC A1100 / Af293) (Neosartorya fumigata).